The sequence spans 92 residues: Cell division protein FtsB (92 aa).

Residues 1–3 (MKW) lie on the Cytoplasmic side of the membrane. A helical transmembrane segment spans residues 4–21 (VTVVLSFALVCCQYSLWF). At 22 to 92 (GKGSIGRNSS…TFYRLIRHNR (71 aa)) the chain is on the periplasmic side. Positions 28–50 (RNSSLREQIAVQEEKNQTLALRN) form a coiled coil.

Belongs to the FtsB family. In terms of assembly, part of a complex composed of FtsB, FtsL and FtsQ.

Its subcellular location is the cell inner membrane. Essential cell division protein. May link together the upstream cell division proteins, which are predominantly cytoplasmic, with the downstream cell division proteins, which are predominantly periplasmic. The polypeptide is Cell division protein FtsB (Neisseria meningitidis serogroup C (strain 053442)).